A 158-amino-acid chain; its full sequence is Probable cyclic pyranopterin monophosphate synthase (158 aa).

Residues 78–80 and 114–115 each bind substrate; these read MCH and ME. Residue Asp-129 is part of the active site.

It belongs to the MoaC family. In terms of assembly, homohexamer; trimer of dimers.

The enzyme catalyses (8S)-3',8-cyclo-7,8-dihydroguanosine 5'-triphosphate = cyclic pyranopterin phosphate + diphosphate. Its pathway is cofactor biosynthesis; molybdopterin biosynthesis. In terms of biological role, catalyzes the conversion of (8S)-3',8-cyclo-7,8-dihydroguanosine 5'-triphosphate to cyclic pyranopterin monophosphate (cPMP). This Methanosarcina acetivorans (strain ATCC 35395 / DSM 2834 / JCM 12185 / C2A) protein is Probable cyclic pyranopterin monophosphate synthase.